A 368-amino-acid polypeptide reads, in one-letter code: tRNA(Met) cytidine acetate ligase (368 aa).

ATP contacts are provided by residues Ile-7–Leu-20, Gly-96, Asn-152, and Arg-175.

This sequence belongs to the TmcAL family.

It is found in the cytoplasm. The catalysed reaction is cytidine(34) in elongator tRNA(Met) + acetate + ATP = N(4)-acetylcytidine(34) in elongator tRNA(Met) + AMP + diphosphate. In terms of biological role, catalyzes the formation of N(4)-acetylcytidine (ac(4)C) at the wobble position of elongator tRNA(Met), using acetate and ATP as substrates. First activates an acetate ion to form acetyladenylate (Ac-AMP) and then transfers the acetyl group to tRNA to form ac(4)C34. In Streptococcus pyogenes serotype M28 (strain MGAS6180), this protein is tRNA(Met) cytidine acetate ligase.